Consider the following 351-residue polypeptide: L-threonine 3-dehydrogenase (351 aa).

Zn(2+) is bound at residue cysteine 39. Active-site charge relay system residues include threonine 41 and histidine 44. Residues histidine 64, glutamate 65, cysteine 94, cysteine 97, cysteine 100, and cysteine 108 each contribute to the Zn(2+) site. NAD(+) contacts are provided by residues isoleucine 176, aspartate 196, arginine 201, 271 to 273 (LGI), and 295 to 296 (IY).

Belongs to the zinc-containing alcohol dehydrogenase family. Homotetramer. Zn(2+) serves as cofactor.

Its subcellular location is the cytoplasm. The enzyme catalyses L-threonine + NAD(+) = (2S)-2-amino-3-oxobutanoate + NADH + H(+). It participates in amino-acid degradation; L-threonine degradation via oxydo-reductase pathway; glycine from L-threonine: step 1/2. Its function is as follows. Catalyzes the NAD(+)-dependent oxidation of L-threonine to 2-amino-3-ketobutyrate. This is L-threonine 3-dehydrogenase from Francisella tularensis subsp. novicida (strain U112).